We begin with the raw amino-acid sequence, 213 residues long: BREX protein BrxA (213 aa).

Belongs to the BrxA family.

Functionally, BREX systems (bacteriophage exclusion) provide immunity against bacteriophage. A probably non-essential part of a type 1 BREX system which protects against dsDNA phage. This system allows phage adsorption but prevents phage DNA replication, without degradation of the phage DNA. Methylation of bacterial DNA by PglX guides self/non-self discrimination. When the brxA-brxB-brxC-pglX-pglZ-brxL genes are transformed into a susceptible E.coli strain (BW25113) they confer very high resistance to infection by bacteriophage VR7 and VpaE1, about 100-fold protection against lambda, T5 and T7 and no protection against RNA phage Qbeta, ssDNA phage M13 or dSDNA phage T4 and VR5. Glycosylated phage DNA is not susceptible to BREX. The BREX system does not confer resistance to lysogenic lambda phage, i.e. prophage that are integrated into the chromosomal DNA and then induced to form phage. The chain is BREX protein BrxA from Escherichia coli O9:H4 (strain HS).